Here is a 199-residue protein sequence, read N- to C-terminus: Recombination protein RecR (199 aa).

The C4-type zinc finger occupies 57 to 72; the sequence is CSICGNITEDDPCVIC. Residues 80 to 176 form the Toprim domain; that stretch reads STVLVVEEAK…KVTRLAHGLS (97 aa).

It belongs to the RecR family.

Its function is as follows. May play a role in DNA repair. It seems to be involved in an RecBC-independent recombinational process of DNA repair. It may act with RecF and RecO. This is Recombination protein RecR from Lactiplantibacillus plantarum (strain ATCC BAA-793 / NCIMB 8826 / WCFS1) (Lactobacillus plantarum).